The chain runs to 318 residues: Mevalonate 3-kinase (318 aa).

Leu-19 contacts substrate. Residues 96–100 and 105–108 each bind ATP; these read YSSQN and SGSS. Substrate is bound by residues Glu-140 and Arg-144. ATP contacts are provided by Arg-185 and Ser-188.

This sequence belongs to the GHMP kinase family. In terms of assembly, homodimer.

The enzyme catalyses (R)-mevalonate + ATP = (R)-3-phosphomevalonate + ADP + H(+). The protein operates within isoprenoid biosynthesis; isopentenyl diphosphate biosynthesis via mevalonate pathway. Functionally, catalyzes the phosphorylation of mevalonate (MVA) to yield mevalonate-3-phosphate. Functions in an alternative mevalonate pathway, only present in extreme acidophiles of the Thermoplasmatales order, which passes through mevalonate 3-phosphate rather than mevalonate 5-phosphate. The polypeptide is Mevalonate 3-kinase (Thermoplasma acidophilum (strain ATCC 25905 / DSM 1728 / JCM 9062 / NBRC 15155 / AMRC-C165)).